The chain runs to 126 residues: Adrenocorticotropic hormone receptor (126 aa).

Residues 1–25 traverse the membrane as a helical segment; it reads VLPEEIFFTISIVGVLENLIVLLAV. Residues 26-34 are Cytoplasmic-facing; that stretch reads FKNKNLQAP. A helical membrane pass occupies residues 35 to 55; that stretch reads MYFFICSLAISDMLGSLYKIL. At 56–80 the chain is on the extracellular side; the sequence is ENILIILRNMGYLKPRGSFETTADD. Residues 81–102 traverse the membrane as a helical segment; that stretch reads IIDSLFVLSLLGAIFSLSVIAA. At 103–123 the chain is on the cytoplasmic side; sequence DRYITIFHALRYHSIVTMRRT. A helical membrane pass occupies residues 124–126; sequence VVV.

This sequence belongs to the G-protein coupled receptor 1 family. As to quaternary structure, interacts with MRAP; increasing ligand-sensitivity and generation of cAMP. Interacts with MRAP2; competing with MRAP for binding to MC2R and impairing the binding of corticotropin (ACTH).

The protein localises to the cell membrane. In terms of biological role, receptor for corticotropin (ACTH). This receptor is mediated by G proteins (G(s)) which activate adenylate cyclase (cAMP). The sequence is that of Adrenocorticotropic hormone receptor (MC2R) from Papio hamadryas (Hamadryas baboon).